A 503-amino-acid chain; its full sequence is Cytochrome P450 11B1, mitochondrial (503 aa).

Residues 1 to 24 constitute a mitochondrion transit peptide; it reads MAIWAKAEAWLAGPWLALNRARTL. Cysteine 450 provides a ligand contact to heme.

It belongs to the cytochrome P450 family. The cofactor is heme.

Its subcellular location is the mitochondrion inner membrane. It catalyses the reaction a steroid + 2 reduced [adrenodoxin] + O2 + 2 H(+) = an 11beta-hydroxysteroid + 2 oxidized [adrenodoxin] + H2O. The catalysed reaction is 11-deoxycortisol + 2 reduced [adrenodoxin] + O2 + 2 H(+) = cortisol + 2 oxidized [adrenodoxin] + H2O. It carries out the reaction 21-hydroxyprogesterone + 2 reduced [adrenodoxin] + O2 + 2 H(+) = corticosterone + 2 oxidized [adrenodoxin] + H2O. The enzyme catalyses corticosterone + 2 reduced [adrenodoxin] + O2 + 2 H(+) = 18-hydroxycorticosterone + 2 oxidized [adrenodoxin] + H2O. It catalyses the reaction 18-hydroxycorticosterone + 2 reduced [adrenodoxin] + O2 + 2 H(+) = aldosterone + 2 oxidized [adrenodoxin] + 2 H2O. The catalysed reaction is 21-hydroxyprogesterone + 2 reduced [adrenodoxin] + O2 + 2 H(+) = 19-hydroxy-11-deoxycorticosterone + 2 oxidized [adrenodoxin] + H2O. It carries out the reaction 19-hydroxy-11-deoxycorticosterone + 2 reduced [adrenodoxin] + O2 + 2 H(+) = 19-oxo-11-deoxycorticosterone + 2 oxidized [adrenodoxin] + 2 H2O. It participates in steroid biosynthesis; glucocorticoid biosynthesis. The protein operates within steroid hormone biosynthesis. A cytochrome P450 monooxygenase that catalyzes the biosynthesis of aldosterone and other adrenal corticoids. Differing from other species (such as human, rat and mice), it is able to catalyze three sequential oxidative reactions of 11-deoxycorticosterone (21-hydroxyprogesterone), namely 11-beta hydroxylation, followed by two successive oxidations at C18 yielding 18-hydroxy and then 18-oxo intermediates, and ending with the formation of aldosterone. Steroid 11beta, 18- and 19-hydroxylase. Mechanistically, uses molecular oxygen inserting one oxygen atom into a substrate and reducing the second into a water molecule. Two electrons are provided by NADPH via a two-protein mitochondrial transfer system comprising flavoprotein FDXR (adrenodoxin/ferredoxin reductase) and nonheme iron-sulfur protein FDX1 or FDX2 (adrenodoxin/ferredoxin). The polypeptide is Cytochrome P450 11B1, mitochondrial (CYP11B1) (Sus scrofa (Pig)).